Consider the following 841-residue polypeptide: Probable inorganic carbon transporter subunit DabA 1 (841 aa).

Zn(2+) contacts are provided by cysteine 352, aspartate 354, histidine 536, and cysteine 551.

It belongs to the inorganic carbon transporter (TC 9.A.2) DabA family. As to quaternary structure, forms a complex with DabB. The cofactor is Zn(2+).

Its subcellular location is the cell inner membrane. Part of an energy-coupled inorganic carbon pump. This Bradyrhizobium sp. (strain ORS 278) protein is Probable inorganic carbon transporter subunit DabA 1.